The chain runs to 142 residues: Hemoglobin subunit alpha-2 (142 aa).

Positions Leu-2–Arg-142 constitute a Globin domain. His-59 is an O2 binding site. A heme b-binding site is contributed by His-88.

The protein belongs to the globin family. In terms of assembly, heterotetramer of two alpha chains and two beta chains. In terms of tissue distribution, red blood cells.

Involved in oxygen transport from the lung to the various peripheral tissues. This Xenopus laevis (African clawed frog) protein is Hemoglobin subunit alpha-2 (hba2).